Here is a 141-residue protein sequence, read N- to C-terminus: Flagellar assembly factor FliW (141 aa).

Belongs to the FliW family. Interacts with translational regulator CsrA and flagellin(s).

Its subcellular location is the cytoplasm. Its function is as follows. Acts as an anti-CsrA protein, binds CsrA and prevents it from repressing translation of its target genes, one of which is flagellin. Binds to flagellin and participates in the assembly of the flagellum. This is Flagellar assembly factor FliW from Clostridium botulinum (strain Alaska E43 / Type E3).